The primary structure comprises 130 residues: Inner membrane protein YqjF (130 aa).

Residues 1–5 (MKKLE) are Cytoplasmic-facing. A helical membrane pass occupies residues 6-26 (DVGVLVARILMPILFITAGWG). Residues 27–45 (KITGYAGTQQYMEAMGVPG) are Periplasmic-facing. A helical membrane pass occupies residues 46-66 (FMLPLVILLEFGGGLAILFGF). The Cytoplasmic portion of the chain corresponds to 67 to 70 (LTRT). The chain crosses the membrane as a helical span at residues 71 to 91 (TALFTAGFTLLTAFLFHSNFA). The Periplasmic segment spans residues 92–101 (EGVNSLMFMK). The chain crosses the membrane as a helical span at residues 102 to 122 (NLTISGGFLLLAITGPGAYSI). Topologically, residues 123 to 130 (DRLLNKKW) are cytoplasmic.

The protein belongs to the DoxX family.

It is found in the cell inner membrane. The sequence is that of Inner membrane protein YqjF (yqjF) from Escherichia coli (strain K12).